Consider the following 605-residue polypeptide: Probable potassium transport system protein Kup 2 (605 aa).

The next 12 membrane-spanning stretches (helical) occupy residues 17–37 (GLVF…IMTL), 45–65 (VLGI…VEYA), 96–116 (MAFA…DGVI), 139–159 (AQGG…IFQF), 169–189 (FGPI…VSII), 211–231 (GLAG…GEAL), 246–266 (AWYF…AFIL), 286–306 (LYIP…QALI), 338–358 (IYIG…MILF), 367–387 (AYGL…TMIF), 394–414 (WKVP…TANL), and 417–437 (LPHG…IMVI).

It belongs to the HAK/KUP transporter (TC 2.A.72) family.

Its subcellular location is the cell inner membrane. It catalyses the reaction K(+)(in) + H(+)(in) = K(+)(out) + H(+)(out). Transport of potassium into the cell. Likely operates as a K(+):H(+) symporter. The sequence is that of Probable potassium transport system protein Kup 2 from Geobacter sulfurreducens (strain ATCC 51573 / DSM 12127 / PCA).